Consider the following 63-residue polypeptide: Keratin-associated protein 8-1 (63 aa).

The segment at 12 to 54 (PGCYWGSYGYPLGYSVGCGYGSTYSPVGYGFGYGYNGCGAFGY) is 12 X 2 AA repeats of G-[YCGS].

The protein belongs to the KRTAP type 8 family. As to quaternary structure, interacts with hair keratins. As to expression, is essentially restricted to only one vertical half of the hair forming compartment and in beard hairs is absent from the central medulla.

Functionally, in the hair cortex, hair keratin intermediate filaments are embedded in an interfilamentous matrix, consisting of hair keratin-associated proteins (KRTAP), which are essential for the formation of a rigid and resistant hair shaft through their extensive disulfide bond cross-linking with abundant cysteine residues of hair keratins. The matrix proteins include the high-sulfur and high-glycine-tyrosine keratins. The polypeptide is Keratin-associated protein 8-1 (KRTAP8-1) (Homo sapiens (Human)).